The following is a 217-amino-acid chain: ATP-dependent Clp protease proteolytic subunit 1 (217 aa).

A disordered region spans residues 1 to 24; sequence MTPLTTGWHPALSPRAEEGDTPPS. Ser-108 (nucleophile) is an active-site residue. The active site involves His-133.

The protein belongs to the peptidase S14 family. In terms of assembly, fourteen ClpP subunits assemble into 2 heptameric rings which stack back to back to give a disk-like structure with a central cavity, resembling the structure of eukaryotic proteasomes.

The protein localises to the cytoplasm. It catalyses the reaction Hydrolysis of proteins to small peptides in the presence of ATP and magnesium. alpha-casein is the usual test substrate. In the absence of ATP, only oligopeptides shorter than five residues are hydrolyzed (such as succinyl-Leu-Tyr-|-NHMec, and Leu-Tyr-Leu-|-Tyr-Trp, in which cleavage of the -Tyr-|-Leu- and -Tyr-|-Trp bonds also occurs).. Its function is as follows. Cleaves peptides in various proteins in a process that requires ATP hydrolysis. Has a chymotrypsin-like activity. Plays a major role in the degradation of misfolded proteins. This Streptomyces avermitilis (strain ATCC 31267 / DSM 46492 / JCM 5070 / NBRC 14893 / NCIMB 12804 / NRRL 8165 / MA-4680) protein is ATP-dependent Clp protease proteolytic subunit 1.